Consider the following 74-residue polypeptide: Arabinogalactan protein 20 (74 aa).

Residues 1–26 (MASRNSVAVIALFAFVFAVISPFAGA) form the signal peptide. Q27 bears the Pyrrolidone carboxylic acid mark. A 4-hydroxyproline mark is found at P31, P33, and P35. O-linked (Ara...) hydroxyproline glycans are attached at residues P31, P33, and P35. S37 carries the GPI-anchor amidated serine lipid modification. Positions 38-74 (DGTSIDQGIAYLLMVVALVLTYLIHPLDASSSSYTFF) are cleaved as a propeptide — removed in mature form.

The protein belongs to the AG-peptide AGP family. In terms of processing, contains 4-hydroxyproline; hydroxylated on Pro-31, Pro-33 and Pro-35. Post-translationally, O-glycosylated on hydroxyprolines; noncontiguous hydroxylproline residues are glycosylated with arabinogalactan.

It localises to the cell membrane. In terms of biological role, proteoglycan that seems to be implicated in diverse developmental roles such as differentiation, cell-cell recognition, embryogenesis and programmed cell death. The protein is Arabinogalactan protein 20 of Arabidopsis thaliana (Mouse-ear cress).